A 542-amino-acid polypeptide reads, in one-letter code: Chaperonin GroEL 2 (542 aa).

ATP is bound by residues 29–32, 86–90, G413, 477–479, and D493; these read TLGP, DGTTT, and NAA.

This sequence belongs to the chaperonin (HSP60) family. In terms of assembly, forms a cylinder of 14 subunits composed of two heptameric rings stacked back-to-back. Interacts with the co-chaperonin GroES.

Its subcellular location is the cytoplasm. The catalysed reaction is ATP + H2O + a folded polypeptide = ADP + phosphate + an unfolded polypeptide.. Its function is as follows. Together with its co-chaperonin GroES, plays an essential role in assisting protein folding. The GroEL-GroES system forms a nano-cage that allows encapsulation of the non-native substrate proteins and provides a physical environment optimized to promote and accelerate protein folding. The sequence is that of Chaperonin GroEL 2 from Kineococcus radiotolerans (strain ATCC BAA-149 / DSM 14245 / SRS30216).